The sequence spans 352 residues: Putative GATA transcription factor 22 (352 aa).

Positions 27-53 (SLHHHLQQQQQQQQHFHHQASSNPSSL) are disordered. The segment covering 33 to 53 (QQQQQQQQHFHHQASSNPSSL) has biased composition (low complexity). Residues 112-119 (PKKETRLK) carry the Nuclear localization signal motif. Positions 163 to 189 (AIITTSDSSKQHTNNDQSSNLSNSERQ) are disordered. Polar residues predominate over residues 165 to 189 (ITTSDSSKQHTNNDQSSNLSNSERQ). Residues 195–249 (DCVIRICSDCNTTKTPLWRSGPRGPKSLCNACGIRQRKARRAAMATATATAVSGV) form a GATA-type zinc finger.

The protein belongs to the type IV zinc-finger family. Class B subfamily. In terms of assembly, forms heterodimers with GATA18. As to expression, expressed predominantly in leaves, and barely in stems, flowers and siliques.

Its subcellular location is the nucleus. In terms of biological role, transcriptional regulator that specifically binds 5'-GATA-3' or 5'-GAT-3' motifs within gene promoters. Involved in the modulation of chloroplast development, growth and division in a cytokinin-dependent manner. Repressor of the gibberellic acid (GA) signaling pathway that regulates flowering and modulates greening, in a SOC1-dependent manner. Prevents the accumulation of SOC1 during flowering. Promotes chlorophyll biosynthesis throughout the plant, by regulating chlorophyll biosynthetic genes (e.g. HEMA1 and GUN4) and chloroplast localized glutamate synthase (e.g. GLU1). Involved in the regulation of sugar-sensing genes (e.g. HXK1, HXK2, STP13 and PLT6). Regulator of germination, senescence, elongation growth and flowering time. Influences also leaf starch content. This chain is Putative GATA transcription factor 22, found in Arabidopsis thaliana (Mouse-ear cress).